The chain runs to 490 residues: Histone-lysine N-methyltransferase Smyd1 (490 aa).

Residues 7-253 enclose the SET domain; sequence ENVEVFTSEG…EGEELTVSYI (247 aa). Position 17 to 19 (17 to 19) interacts with S-adenosyl-L-methionine; that stretch reads KGR. Zn(2+) is bound by residues Cys52, Cys55, Cys65, Cys68, Cys74, Cys78, His86, and Cys90. Residues 52 to 90 form an MYND-type zinc finger; that stretch reads CHTCFKRQEKLHRCGQCKFAHYCDRTCQKDAWLNHKNEC. S-adenosyl-L-methionine contacts are provided by residues His135 and 205 to 206; that span reads NH. Cys208 lines the Zn(2+) pocket. 270-272 serves as a coordination point for S-adenosyl-L-methionine; the sequence is YYF. Positions 274, 276, and 279 each coordinate Zn(2+).

This sequence belongs to the class V-like SAM-binding methyltransferase superfamily. Interacts with HDAC1, HDAC2 and HDAC3. Interacts (via MYND-type zinc finger) with NACA isoform skNAC. Expressed in cardiac and skeletal muscle, lymphocytes and thymus.

It is found in the cytoplasm. The protein resides in the nucleus. The catalysed reaction is L-lysyl(4)-[histone H3] + 3 S-adenosyl-L-methionine = N(6),N(6),N(6)-trimethyl-L-lysyl(4)-[histone H3] + 3 S-adenosyl-L-homocysteine + 3 H(+). In terms of biological role, methylates histone H3 at 'Lys-4' (H3K4me). Acts as a transcriptional repressor. Essential for cardiomyocyte differentiation and cardiac morphogenesis. The polypeptide is Histone-lysine N-methyltransferase Smyd1 (Smyd1) (Mus musculus (Mouse)).